The sequence spans 834 residues: Membrane-associated lipoprotein (834 aa).

An N-terminal signal peptide occupies residues 1 to 25 (MKKNKLTTLALILPITILTPIVIAS). Cysteine 26 carries the N-palmitoyl cysteine lipid modification. Residue cysteine 26 is the site of S-diacylglycerol cysteine attachment. One can recognise a Lipoprotein-associated type-17 domain in the interval 143–237 (RLKDTFDFKL…LLEVSGFKSN (95 aa)).

The protein resides in the cell membrane. This is Membrane-associated lipoprotein from Ureaplasma parvum serovar 3 (strain ATCC 700970).